The following is a 334-amino-acid chain: SH3 and cysteine-rich domain-containing protein 3 (334 aa).

Residues 1–26 (MAQYDQLEDKDSLDIHDNPPAPENVV) are disordered. The span at 7–17 (LEDKDSLDIHD) shows a compositional bias: basic and acidic residues. The Phorbol-ester/DAG-type zinc finger occupies 62 to 113 (PHKFKDHYCKKPKFCDVCARMIVLNNKFALRCKNCKTNIHHSCQSYVQFQRC). A compositionally biased stretch (acidic residues) spans 178–190 (EEEAQQPKEDEEG). The disordered stretch occupies residues 178–215 (EEEAQQPKEDEEGAEGKQDGDKKDKTATDDKNKKQQQT). The span at 191–210 (AEGKQDGDKKDKTATDDKNK) shows a compositional bias: basic and acidic residues. 2 consecutive SH3 domains span residues 217–276 (SQSH…RVRA) and 277–334 (GERV…LHEL).

As to quaternary structure, component of a calcium channel complex with CACNA1S. Expressed in muscles at the muscle triad.

It localises to the cytoplasm. Its subcellular location is the cell membrane. It is found in the sarcolemma. The protein resides in the T-tubule. Functionally, required for normal excitation-contraction coupling in skeletal muscle and for normal muscle contraction in response to membrane depolarization. Required for normal Ca(2+) release from the sarcplasmic reticulum, which ultimately leads to muscle contraction. Probably functions via its effects on muscle calcium channels. Increases CACNA1S channel activity, in addition to its role in enhancing the expression of CACNA1S at the cell membrane. Has a redundant role in promoting the expression of the calcium channel CACNA1S at the cell membrane. This chain is SH3 and cysteine-rich domain-containing protein 3, found in Danio rerio (Zebrafish).